The primary structure comprises 411 residues: Na(+)-translocating NADH-quinone reductase subunit F (411 aa).

A helical membrane pass occupies residues 5–25; that stretch reads VILALGIAAFTVIVLVLVAII. Residues 36 to 130 form the 2Fe-2S ferredoxin-type domain; that stretch reads GDITIDINDD…NMEVELPEEI (95 aa). Residues Cys-73, Cys-79, Cys-82, and Cys-114 each coordinate [2Fe-2S] cluster. The FAD-binding FR-type domain occupies 133–273; the sequence is VKKWECTVIS…SGPFGEFFAK (141 aa). A catalytic region spans residues 276–393; it reads DAEMVFIGGG…PVMNAAVIKM (118 aa).

It belongs to the NqrF family. Composed of six subunits; NqrA, NqrB, NqrC, NqrD, NqrE and NqrF. Requires [2Fe-2S] cluster as cofactor. The cofactor is FAD.

Its subcellular location is the cell inner membrane. It catalyses the reaction a ubiquinone + n Na(+)(in) + NADH + H(+) = a ubiquinol + n Na(+)(out) + NAD(+). Functionally, NQR complex catalyzes the reduction of ubiquinone-1 to ubiquinol by two successive reactions, coupled with the transport of Na(+) ions from the cytoplasm to the periplasm. The first step is catalyzed by NqrF, which accepts electrons from NADH and reduces ubiquinone-1 to ubisemiquinone by a one-electron transfer pathway. The protein is Na(+)-translocating NADH-quinone reductase subunit F of Haemophilus influenzae (strain ATCC 51907 / DSM 11121 / KW20 / Rd).